We begin with the raw amino-acid sequence, 302 residues long: Deoxyribonuclease-1-like 1 (302 aa).

An N-terminal signal peptide occupies residues 1–18 (MHYPTALLFLILANGAQA). Active-site residues include glutamate 97 and histidine 148. Cysteine 187 and cysteine 224 form a disulfide bridge. The N-linked (GlcNAc...) asparagine glycan is linked to asparagine 261.

This sequence belongs to the DNase I family. In terms of tissue distribution, highest levels in skeletal and cardiac muscles. Detectable in all other tissues tested except brain.

Its subcellular location is the endoplasmic reticulum. The sequence is that of Deoxyribonuclease-1-like 1 (DNASE1L1) from Homo sapiens (Human).